A 122-amino-acid polypeptide reads, in one-letter code: Large ribosomal subunit protein uL22 (122 aa).

Residues Val-102–Lys-122 are disordered.

The protein belongs to the universal ribosomal protein uL22 family. As to quaternary structure, part of the 50S ribosomal subunit.

Its function is as follows. This protein binds specifically to 23S rRNA; its binding is stimulated by other ribosomal proteins, e.g. L4, L17, and L20. It is important during the early stages of 50S assembly. It makes multiple contacts with different domains of the 23S rRNA in the assembled 50S subunit and ribosome. The globular domain of the protein is located near the polypeptide exit tunnel on the outside of the subunit, while an extended beta-hairpin is found that lines the wall of the exit tunnel in the center of the 70S ribosome. This Helicobacter pylori (strain ATCC 700392 / 26695) (Campylobacter pylori) protein is Large ribosomal subunit protein uL22.